We begin with the raw amino-acid sequence, 504 residues long: MQCFKLASRRSLYNARVLQADNIGDKQRSPDLEAARQNTQIVVVGAGLAGLSAAQHLLSHGFRRTVILEATDRYGGRINTQRFGDTYCELGAKWVKIDGSQDSMYELLRNTEGLGKQIKQPDRATYLQDGSRINPAMVELIDTLFRQLCRGFKVSERVKTGGDLHSLDNVMNYFRTESDRIIGVSFQHPKDQLAAREIFQSLFKEFGSILGCCLEYVNIEHITKCPVQQEQRPLYVPTGLDNVVDDLIQNMDKAQLQTGKPVGQIQWTPAPMKSVGCLDGSLYNADHIICTLPLGVLKSFAGVLFRPTLPLDKMLAIRNLGFGNPLKIYLSYKKPIGRWLKGSLRPLGTLLNPSVEQQPERNWTQQVVEISQVPSSQHVLEVHVGGGYYEEIEKLPDEELLEQITGLLRRCVSSHLVPYPQELLRSNWSTSACYLGGRPYFSTNSSARDVQRLAAPLGEKSPGLLFAGDATSLRGFGTIDAARSSGIREAQRIIDYYLKSVHCG.

In terms of tissue distribution, low levels seen in adult heads, thorax, abdomen and ovaries, high levels in testes.

It is found in the cytoplasm. Has a non-vital function. This is Protein anon-37Cs (anon-37Cs) from Drosophila melanogaster (Fruit fly).